Consider the following 376-residue polypeptide: WD repeat-containing protein wdr-5.1 (376 aa).

A compositionally biased stretch (polar residues) spans 1–24 (MDTSENAASAAEQQPTQQIDQLTV). Residues 1–70 (MDTSENAASA…TPNPNAAGAS (70 aa)) are disordered. Over residues 25–53 (PNAPDGGSSAPAPSTSPNSISPSNPTGTP) the composition is skewed to low complexity. WD repeat units follow at residues 85-115 (GHTKSISSAKFSPCGKYLGTSSADKTVKIWN), 127-157 (GHKLGVNDIAWSSDSRCVVSASDDKTLKIFE), 169-199 (GHNNYVFCCNFNPQSSLVVSGSFDESVRIWD), 211-241 (AHSDPVSAVSFNRDGSLIASGSYDGLVRIWD), 254-284 (DENPPVAFVKFSPNGKYILASNLDSTLKLWD), 296-329 (GHENSKYCIFANFSVTGGKWIISGSEDCKIYIWN), and 341-373 (GHTQPVLASDCHPVQNIIASGALEPDNKIHIWR).

Belongs to the WD repeat WDR5/wds family. In terms of assembly, component of the SET2 complex (also known as the SET1/COMPASS complex), which contains at least set-2, swd-2.1, cfp-1, rbbp-5, wdr-5.1, dpy-30 and ash-2. Within the complex, interacts with cfp-1, ash-2, dpy-30 and hda-1. Interacts with histone H3 both unmethylated and methylated at 'Lys-4'. Interacts with jmjd-3.1, ceh-6, sox-2, sem-4 and egl-27. Interacts with set-2. As to expression, enriched in the germline. Detected in all nuclei of the embryo. In larvae, expression is detected in the nuclei of seam cells, somatic gonad precursor cells Z1 and Z4, vulval precursor cells, distal tip cells, hypodermal cells, intestinal and muscle cells. Also detected in the neurons from the ventral nerve cord, head and tail region. Expressed in the head and tail region, intestinal cells, muscle cells, cells of the vulva, spermatheca and sheath cells in adults.

The protein resides in the nucleus. Its function is as follows. Contributes to histone modification. May position the N-terminus of histone H3 for efficient trimethylation at 'Lys-4'. Required for di- and trimethylation, particularly for the trimethylation at 'Lys-4' of histone H3. Not required for demethylation of histone H3 'Lys-27'. H3 'Lys-4' methylation represents a specific tag for epigenetic transcriptional activation, germline establishment, maintenance and function. Implicated in the epigenetic inheritance of lifespan over several generations. Acts in the germline to limit the longevity of the soma, probably by regulating a lipid metabolism pathway that signals from the germline to the intestine, thereby preventing accumulation of mono-unsaturated fatty acids. Required for RNA interference with probable antagonistic role against hpl-2 function. Plays a role in vulval cell fate specification by acting in the synthetic multivulva pathway independent of set-2. Sex determining protein required in the germline to promote the spermatogenesis to oogenesis switch during the late larval stages of development. Acts with the sex determining factor tra-1, and redundantly with wdr-5.2, to regulate fog-3 expression, which in turn determines germ cell fate. Cooperates with jmjd-3.1, egl-27 and unc-3 to ensure robust transdifferentiation of the Y rectal cell to the PDA motor neuron during larval development. The chain is WD repeat-containing protein wdr-5.1 (wdr-5.1) from Caenorhabditis elegans.